The sequence spans 289 residues: Rhodopsin (289 aa).

The Extracellular portion of the chain corresponds to 1–7 (YLVSPAG). Residues 8-32 (YAALGAYMFLLILVGFPVNFLTLYV) traverse the membrane as a helical segment. Residues 33-44 (TLEHKKLRTPLN) are Cytoplasmic-facing. A helical transmembrane segment spans residues 45 to 67 (YILLNLAVADLFMVLGGFTTTMY). Residues 68–81 (TSMHGYFVLGRLGC) lie on the Extracellular side of the membrane. Residues cysteine 81 and cysteine 158 are joined by a disulfide bond. A helical transmembrane segment spans residues 82-104 (NLEGFFVTLGGEIALWSLVVLAI). The short motif at 105–107 (ERW) is the 'Ionic lock' involved in activated form stabilization element. The Cytoplasmic portion of the chain corresponds to 105 to 123 (ERWIGVFKSIRNFRFTEDH). Residues 124–144 (AIMGLGFSWVMAATCAVPPLV) traverse the membrane as a helical segment. The Extracellular portion of the chain corresponds to 145–173 (GWLRYIPEGMQCSCGVDYYTRAEGFNNES). The N-linked (GlcNAc...) asparagine glycan is linked to asparagine 171. The chain crosses the membrane as a helical span at residues 174 to 195 (FVIYMFIVHFLIPLIVIFFCYG). Residues 196–223 (RLLCAVKEAAAAQQESETTQRAEKEVSR) lie on the Cytoplasmic side of the membrane. A helical membrane pass occupies residues 224–245 (MVVIMVIGYLVCWLPYASVAWW). Residues 246–257 (IFCNQGSEFGPI) are Extracellular-facing. A helical membrane pass occupies residues 258–279 (FMTLPAFFAKSPAIYNPLIYIC). N6-(retinylidene)lysine is present on lysine 267. Over 280 to 289 (MNKQFPHCMI) the chain is Cytoplasmic.

The protein belongs to the G-protein coupled receptor 1 family. Opsin subfamily. In terms of processing, phosphorylated on some or all of the serine and threonine residues present in the C-terminal region. Post-translationally, contains one covalently linked retinal chromophore.

Its subcellular location is the membrane. The protein localises to the cell projection. It is found in the cilium. It localises to the photoreceptor outer segment. Photoreceptor required for image-forming vision at low light intensity. While most salt water fish species use retinal as chromophore, most freshwater fish use 3-dehydroretinal, or a mixture of retinal and 3-dehydroretinal. Light-induced isomerization of 11-cis to all-trans retinal triggers a conformational change that activates signaling via G-proteins. Subsequent receptor phosphorylation mediates displacement of the bound G-protein alpha subunit by arrestin and terminates signaling. This chain is Rhodopsin (rho), found in Leocottus kesslerii (Kessler's sculpin).